The chain runs to 442 residues: tRNA modification GTPase MnmE (442 aa).

Arg27, Glu84, and Lys124 together coordinate (6S)-5-formyl-5,6,7,8-tetrahydrofolate. Residues 221 to 366 enclose the TrmE-type G domain; sequence GLHVVIVGAP…LLDALQAFAE (146 aa). GTP-binding positions include 231 to 236, 250 to 256, and 275 to 278; these read NAGKSS, SEEAGTT, and DTAG. The Mg(2+) site is built by Ser235 and Thr256. Residue Lys442 participates in (6S)-5-formyl-5,6,7,8-tetrahydrofolate binding.

This sequence belongs to the TRAFAC class TrmE-Era-EngA-EngB-Septin-like GTPase superfamily. TrmE GTPase family. As to quaternary structure, homodimer. Heterotetramer of two MnmE and two MnmG subunits. The cofactor is K(+).

Its subcellular location is the cytoplasm. Its function is as follows. Exhibits a very high intrinsic GTPase hydrolysis rate. Involved in the addition of a carboxymethylaminomethyl (cmnm) group at the wobble position (U34) of certain tRNAs, forming tRNA-cmnm(5)s(2)U34. The sequence is that of tRNA modification GTPase MnmE from Brucella suis (strain ATCC 23445 / NCTC 10510).